The sequence spans 366 residues: Glucose 1-dehydrogenase 2 (366 aa).

Residue C39 coordinates Zn(2+). Substrate is bound at residue S41. Residues H66 and E67 each coordinate Zn(2+). Substrate-binding residues include N90, E116, Q152, and D156. Zn(2+) is bound at residue Q152. Residues 212 to 214 (NRR), 277 to 279 (FGF), 305 to 307 (LIN), and K354 each bind NADP(+). Residue N307 coordinates substrate.

The protein belongs to the zinc-containing alcohol dehydrogenase family. Glucose 1-dehydrogenase subfamily. Zn(2+) is required as a cofactor.

It carries out the reaction D-glucose + NAD(+) = D-glucono-1,5-lactone + NADH + H(+). The enzyme catalyses D-glucose + NADP(+) = D-glucono-1,5-lactone + NADPH + H(+). Functionally, catalyzes the NAD(P)(+)-dependent oxidation of D-glucose to D-gluconate via gluconolactone. Can utilize both NAD(+) and NADP(+) as electron acceptor. Is involved in the degradation of glucose through a non-phosphorylative variant of the Entner-Doudoroff pathway. This Caldivirga maquilingensis (strain ATCC 700844 / DSM 13496 / JCM 10307 / IC-167) protein is Glucose 1-dehydrogenase 2.